Reading from the N-terminus, the 141-residue chain is Nucleoside diphosphate kinase (141 aa).

6 residues coordinate ATP: lysine 11, phenylalanine 59, arginine 87, threonine 93, arginine 104, and asparagine 114. Histidine 117 acts as the Pros-phosphohistidine intermediate in catalysis.

Belongs to the NDK family. Homotetramer. Mg(2+) serves as cofactor.

Its subcellular location is the cytoplasm. It catalyses the reaction a 2'-deoxyribonucleoside 5'-diphosphate + ATP = a 2'-deoxyribonucleoside 5'-triphosphate + ADP. It carries out the reaction a ribonucleoside 5'-diphosphate + ATP = a ribonucleoside 5'-triphosphate + ADP. Its function is as follows. Major role in the synthesis of nucleoside triphosphates other than ATP. The ATP gamma phosphate is transferred to the NDP beta phosphate via a ping-pong mechanism, using a phosphorylated active-site intermediate. This chain is Nucleoside diphosphate kinase, found in Verminephrobacter eiseniae (strain EF01-2).